Reading from the N-terminus, the 712-residue chain is Polyribonucleotide nucleotidyltransferase (712 aa).

2 residues coordinate Mg(2+): Asp-487 and Asp-493. In terms of domain architecture, KH spans 554–613 (PKIITMTINPDKIRDVIGPSGKQINKIIEETGVKIDIEQDGTVFISSINQEMNDKAKKII). The S1 motif domain maps to 623–691 (GEIYEGKVKR…KQGRVNLSRK (69 aa)).

This sequence belongs to the polyribonucleotide nucleotidyltransferase family. It depends on Mg(2+) as a cofactor.

The protein localises to the cytoplasm. The catalysed reaction is RNA(n+1) + phosphate = RNA(n) + a ribonucleoside 5'-diphosphate. In terms of biological role, involved in mRNA degradation. Catalyzes the phosphorolysis of single-stranded polyribonucleotides processively in the 3'- to 5'-direction. This is Polyribonucleotide nucleotidyltransferase from Bacillus cereus (strain G9842).